Here is a 417-residue protein sequence, read N- to C-terminus: Pelargonidin 3-O-(6-caffeoylglucoside) 5-O-(6-O-malonylglucoside) 4'''-malonyltransferase (417 aa).

Residues H147 and D360 each act as proton acceptor in the active site.

This sequence belongs to the plant acyltransferase family. In terms of assembly, monomer. As to expression, expressed at higher level in recently opened, fully pigmented flowers.

It carries out the reaction 4'''-demalonylsalvianin + malonyl-CoA = salvianin + CoA. Its pathway is pigment biosynthesis; anthocyanin biosynthesis. With respect to regulation, inhibited by the following metal ions: Cd(2+), Cu(2+), Fe(2+), Hg(2+) and Zn(2+). Activity is strongly inhibited by CoA-SH and partially inhibited by acetyl-CoA, caffeic acid and bisdemalonylsalvianin. In terms of biological role, catalyzes the transfer of the malonyl group from malonyl-CoA to the 4'''-hydroxyl group of the 5-glucosyl moiety of anthocyanins. Anthocyanins are ubiquitous colored pigments that are responsible for petal color. This Salvia splendens (Scarlet sage) protein is Pelargonidin 3-O-(6-caffeoylglucoside) 5-O-(6-O-malonylglucoside) 4'''-malonyltransferase.